The chain runs to 441 residues: Chromosome partition protein MukF (441 aa).

The segment at 208–236 is leucine-zipper; it reads LTETSSTLRELQDTLEAAGDKLQTSLLSI.

This sequence belongs to the MukF family. In terms of assembly, interacts, and probably forms a ternary complex, with MukE and MukB via its C-terminal region. The complex formation is stimulated by calcium or magnesium. It is required for an interaction between MukE and MukB.

The protein resides in the cytoplasm. The protein localises to the nucleoid. Involved in chromosome condensation, segregation and cell cycle progression. May participate in facilitating chromosome segregation by condensation DNA from both sides of a centrally located replisome during cell division. Not required for mini-F plasmid partitioning. Probably acts via its interaction with MukB and MukE. Overexpression results in anucleate cells. It has a calcium binding activity. This Pectobacterium atrosepticum (strain SCRI 1043 / ATCC BAA-672) (Erwinia carotovora subsp. atroseptica) protein is Chromosome partition protein MukF.